A 442-amino-acid chain; its full sequence is GTPase Der (442 aa).

2 consecutive EngA-type G domains span residues 3–167 (PTIV…PPDV) and 177–350 (PRIA…AAAM). GTP is bound by residues 9-16 (GRPNVGKS), 56-60 (DTAGF), 119-122 (NKSE), 183-190 (GRPNVGKS), 230-234 (DTAGL), and 295-298 (NKWD). Residues 351–435 (VNLSTPRLTR…PLRIQFRTAH (85 aa)) form the KH-like domain.

This sequence belongs to the TRAFAC class TrmE-Era-EngA-EngB-Septin-like GTPase superfamily. EngA (Der) GTPase family. As to quaternary structure, associates with the 50S ribosomal subunit.

Its function is as follows. GTPase that plays an essential role in the late steps of ribosome biogenesis. The sequence is that of GTPase Der from Aromatoleum aromaticum (strain DSM 19018 / LMG 30748 / EbN1) (Azoarcus sp. (strain EbN1)).